We begin with the raw amino-acid sequence, 514 residues long: Bifunctional purine biosynthesis protein PurH (514 aa).

One can recognise an MGS-like domain in the interval 1-145 (MIKRALISVS…KNYQDVAVIV (145 aa)).

The protein belongs to the PurH family.

It catalyses the reaction (6R)-10-formyltetrahydrofolate + 5-amino-1-(5-phospho-beta-D-ribosyl)imidazole-4-carboxamide = 5-formamido-1-(5-phospho-D-ribosyl)imidazole-4-carboxamide + (6S)-5,6,7,8-tetrahydrofolate. The enzyme catalyses IMP + H2O = 5-formamido-1-(5-phospho-D-ribosyl)imidazole-4-carboxamide. It participates in purine metabolism; IMP biosynthesis via de novo pathway; 5-formamido-1-(5-phospho-D-ribosyl)imidazole-4-carboxamide from 5-amino-1-(5-phospho-D-ribosyl)imidazole-4-carboxamide (10-formyl THF route): step 1/1. The protein operates within purine metabolism; IMP biosynthesis via de novo pathway; IMP from 5-formamido-1-(5-phospho-D-ribosyl)imidazole-4-carboxamide: step 1/1. The sequence is that of Bifunctional purine biosynthesis protein PurH from Ruminiclostridium cellulolyticum (strain ATCC 35319 / DSM 5812 / JCM 6584 / H10) (Clostridium cellulolyticum).